The following is a 279-amino-acid chain: 3-methyl-2-oxobutanoate hydroxymethyltransferase (279 aa).

Asp43 and Asp82 together coordinate Mg(2+). Residues 43–44 (DS), Asp82, and Lys112 each bind 3-methyl-2-oxobutanoate. Glu114 provides a ligand contact to Mg(2+). Residue Glu181 is the Proton acceptor of the active site.

This sequence belongs to the PanB family. As to quaternary structure, homodecamer; pentamer of dimers. The cofactor is Mg(2+).

The protein resides in the cytoplasm. It carries out the reaction 3-methyl-2-oxobutanoate + (6R)-5,10-methylene-5,6,7,8-tetrahydrofolate + H2O = 2-dehydropantoate + (6S)-5,6,7,8-tetrahydrofolate. It participates in cofactor biosynthesis; (R)-pantothenate biosynthesis; (R)-pantoate from 3-methyl-2-oxobutanoate: step 1/2. Its function is as follows. Catalyzes the reversible reaction in which hydroxymethyl group from 5,10-methylenetetrahydrofolate is transferred onto alpha-ketoisovalerate to form ketopantoate. In Lysinibacillus sphaericus (strain C3-41), this protein is 3-methyl-2-oxobutanoate hydroxymethyltransferase.